The sequence spans 380 residues: MRKNCDISTVVVQIDEFGIYIGNASDKEPTWKVDLVPYKQSWVPISIVTTIIQRYCLNTFNCLAEIVRVVLVLDIFVTRKQKKELCDGLFNTLNVPITLWICAPLTAILSTSTRDAIIVDIGMKETKFIVILDLCILMHYTKTSKRSLSTVLERMADCFKLNNKKNSQKLLEDEEFAVTEALMKSLLKSRVPSKPTEELYQLTDQEAYFRYSDILPLAETTCQTNKTERGSSFNDAEKIRVPSWIANAGIEALFEGSDAGGSDIADQALPNVLLSLYRILPIDIRRIMSKLIVFNGILPSLPGWYQRFQNEMTSRGLAIKAVPGQTTADMMAWNGASTTCESQLDYDPDDPKHLRHSIVESPLLYGQDQYFNGENAPEWW.

The protein belongs to the actin family. ARP10 subfamily.

It localises to the cytoplasm. Its subcellular location is the cytoskeleton. The protein localises to the nucleus. The chain is Actin-like protein arp10 (arp10) from Schizosaccharomyces pombe (strain 972 / ATCC 24843) (Fission yeast).